We begin with the raw amino-acid sequence, 116 residues long: NADH-ubiquinone oxidoreductase chain 3 (116 aa).

3 helical membrane passes run 3–23 (LITTIITITITLSAVLATISF), 56–76 (FFLIAILFLLFDLEIALLLPL), and 87–107 (LTLIWSTAVLALLTLGLIYEW).

The protein belongs to the complex I subunit 3 family.

The protein resides in the mitochondrion membrane. It catalyses the reaction a ubiquinone + NADH + 5 H(+)(in) = a ubiquinol + NAD(+) + 4 H(+)(out). Its function is as follows. Core subunit of the mitochondrial membrane respiratory chain NADH dehydrogenase (Complex I) that is believed to belong to the minimal assembly required for catalysis. Complex I functions in the transfer of electrons from NADH to the respiratory chain. The immediate electron acceptor for the enzyme is believed to be ubiquinone. This Oncorhynchus gorbuscha (Pink salmon) protein is NADH-ubiquinone oxidoreductase chain 3 (MT-ND3).